A 398-amino-acid chain; its full sequence is Trans-2-enoyl-CoA reductase [NADH] (398 aa).

NAD(+) contacts are provided by residues 47 to 52 (GASSGF), 74 to 75 (YE), 111 to 112 (DA), and 139 to 140 (LA). Y225 provides a ligand contact to substrate. The active-site Proton donor is the Y235. NAD(+)-binding positions include K244 and 274–276 (LVT).

Belongs to the TER reductase family. Monomer.

The enzyme catalyses a 2,3-saturated acyl-CoA + NAD(+) = a (2E)-enoyl-CoA + NADH + H(+). Its pathway is lipid metabolism; fatty acid biosynthesis. In terms of biological role, involved in the fatty acid synthesis (FAS II). Catalyzes the reduction of the carbon-carbon double bond of crotonyl-CoA to yield butyryl-CoA. The polypeptide is Trans-2-enoyl-CoA reductase [NADH] (Clostridium acetobutylicum (strain ATCC 824 / DSM 792 / JCM 1419 / IAM 19013 / LMG 5710 / NBRC 13948 / NRRL B-527 / VKM B-1787 / 2291 / W)).